The sequence spans 368 residues: PPE family immunomodulator PPE68 (368 aa).

2 disordered regions span residues 255–280 (LGTS…LLRA) and 312–368 (AAAG…EDDW). Positions 312–327 (AAAGSSATGGAAPVGA) are enriched in low complexity. The span at 354-368 (REEDDEDDWDEEDDW) shows a compositional bias: acidic residues.

It belongs to the mycobacterial PPE family. Homodimer. Interacts with PE35. PE35/PPE68 complex interacts with human TLR2.

It is found in the secreted. Its subcellular location is the cell wall. The protein resides in the cell membrane. It localises to the cell surface. Plays a major role in RD1-associated pathogenesis, and may contribute to the establishment and maintenance of M.tuberculosis infection. Together with PE35, stimulates the secretion of IL-10 and MCP-1 from human macrophages, via the interaction with human Toll-like receptor 2 (TLR2). This Mycobacterium tuberculosis (strain CDC 1551 / Oshkosh) protein is PPE family immunomodulator PPE68 (PPE68).